A 209-amino-acid polypeptide reads, in one-letter code: Nucleoside triphosphate pyrophosphatase (209 aa).

Asp-79 acts as the Proton acceptor in catalysis.

The protein belongs to the Maf family. It depends on a divalent metal cation as a cofactor.

The protein localises to the cytoplasm. The catalysed reaction is a ribonucleoside 5'-triphosphate + H2O = a ribonucleoside 5'-phosphate + diphosphate + H(+). It catalyses the reaction a 2'-deoxyribonucleoside 5'-triphosphate + H2O = a 2'-deoxyribonucleoside 5'-phosphate + diphosphate + H(+). Nucleoside triphosphate pyrophosphatase. May have a dual role in cell division arrest and in preventing the incorporation of modified nucleotides into cellular nucleic acids. The polypeptide is Nucleoside triphosphate pyrophosphatase (Mycolicibacterium vanbaalenii (strain DSM 7251 / JCM 13017 / BCRC 16820 / KCTC 9966 / NRRL B-24157 / PYR-1) (Mycobacterium vanbaalenii)).